Reading from the N-terminus, the 779-residue chain is Endonuclease MutS2 (779 aa).

Residue 328–335 participates in ATP binding; it reads GPNTGGKT. A Smr domain is found at 704 to 779; sequence LDLRGKRYEE…GSGATIVTLG (76 aa).

It belongs to the DNA mismatch repair MutS family. MutS2 subfamily. As to quaternary structure, homodimer. Binds to stalled ribosomes, contacting rRNA.

Endonuclease that is involved in the suppression of homologous recombination and thus may have a key role in the control of bacterial genetic diversity. Its function is as follows. Acts as a ribosome collision sensor, splitting the ribosome into its 2 subunits. Detects stalled/collided 70S ribosomes which it binds and splits by an ATP-hydrolysis driven conformational change. Acts upstream of the ribosome quality control system (RQC), a ribosome-associated complex that mediates the extraction of incompletely synthesized nascent chains from stalled ribosomes and their subsequent degradation. Probably generates substrates for RQC. In Streptococcus agalactiae serotype III (strain NEM316), this protein is Endonuclease MutS2.